The following is a 523-amino-acid chain: 2-isopropylmalate synthase (523 aa).

Positions 5–267 (VIIFDTTLRD…ETGINAKEIH (263 aa)) constitute a Pyruvate carboxyltransferase domain. Residues Asp14, His202, His204, and Asn238 each contribute to the Mn(2+) site. The interval 392-523 (KLAQLVVHSD…QKDRSELGGV (132 aa)) is regulatory domain.

It belongs to the alpha-IPM synthase/homocitrate synthase family. LeuA type 1 subfamily. Homodimer. It depends on Mn(2+) as a cofactor.

The protein localises to the cytoplasm. The enzyme catalyses 3-methyl-2-oxobutanoate + acetyl-CoA + H2O = (2S)-2-isopropylmalate + CoA + H(+). It functions in the pathway amino-acid biosynthesis; L-leucine biosynthesis; L-leucine from 3-methyl-2-oxobutanoate: step 1/4. Its function is as follows. Catalyzes the condensation of the acetyl group of acetyl-CoA with 3-methyl-2-oxobutanoate (2-ketoisovalerate) to form 3-carboxy-3-hydroxy-4-methylpentanoate (2-isopropylmalate). In Shewanella sediminis (strain HAW-EB3), this protein is 2-isopropylmalate synthase.